The sequence spans 914 residues: Solute carrier family 12 member 9 (914 aa).

Topologically, residues 1-36 (MASENSPLLAYRLLGEEGAAFPPNGAGGSGVASARK) are cytoplasmic. Phosphoserine is present on Ser-6. Residues 37–57 (LSTFLGVVVPTVLSMFSIVVF) form a helical membrane-spanning segment. Topologically, residues 58–72 (LRIGFVVGHAGLLQA) are extracellular. Residues 73-93 (LAMLLVAYVILALTVLSVCAI) form a helical membrane-spanning segment. The Cytoplasmic portion of the chain corresponds to 94-119 (ATNGAVRGGGAYFMISRTLGPEVGGS). A helical membrane pass occupies residues 120–140 (IGLMFYLANVCGCAVSLLGLV). At 141–167 (ESILDVFGADVTGSSGIKVLPQGYGWN) the chain is on the extracellular side. A helical transmembrane segment spans residues 168-188 (LLYGSLLLGLVGGVCALGAGL). The Cytoplasmic segment spans residues 189–193 (YARAS). A helical membrane pass occupies residues 194-214 (FLTFLLVSGSLASVLVSFVAV). Residues 215–262 (GPRNITLAPRPGTNGSSVPPRHGHFTGFNGSTLKDNLGAGYAEDYTTG) lie on the Extracellular side of the membrane. Asn-218, Asn-228, and Asn-243 each carry an N-linked (GlcNAc...) asparagine glycan. The chain crosses the membrane as a helical span at residues 263-283 (AMMTFASVFAVLFNGCTGIMA). The Cytoplasmic segment spans residues 284 to 297 (GANMSGELKDPSRA). Residues 298–318 (IPLGTIIAVAYTFFIYILLFF) traverse the membrane as a helical segment. Residues 319–338 (LSSFTCDRALLQGDYGFFRD) are Extracellular-facing. A helical transmembrane segment spans residues 339–359 (ISLWPPLVLIGIYATALSASM). The Cytoplasmic segment spans residues 360-376 (SSLIGASRILHALAQDD). The chain crosses the membrane as a helical span at residues 377–399 (LFGVILAPAKVVSGGGNPWGAVL). Residues 400 to 416 (YSWGLVQLVLLAGKLNT) are Extracellular-facing. A helical transmembrane segment spans residues 417-437 (LAAVVTVFYLVAYAAVDLSCL). The Cytoplasmic segment spans residues 438–466 (SLEWASAPNFRPTFSLFSWHTCLLGVASC). A helical transmembrane segment spans residues 467–487 (LLMMFLISPGAAGGSLLLMGL). Residues 488-740 (LSALLTARGG…LLRPRGGPGY (253 aa)) lie on the Extracellular side of the membrane. Positions 645–678 (PAFSEPAEGTREGGSPALSTLFPPPRAPGSPRAL) are disordered. Residues 741–761 (VDVCGLFLLQMATILSMVPAW) form a helical membrane-spanning segment. Residues 762–914 (HSARLRIFLC…GVTPVTCTDL (153 aa)) are Cytoplasmic-facing. The tract at residues 843 to 864 (QQGRGTGGGPGGPEGRDGEEGP) is disordered. The span at 846–855 (RGTGGGPGGP) shows a compositional bias: gly residues.

This sequence belongs to the SLC12A transporter family. Interacts with SLC12A1.

The protein resides in the cell membrane. The protein localises to the lysosome membrane. Its function is as follows. May be an inhibitor of SLC12A1. Seems to correspond to a subunit of a multimeric transport system and thus, additional subunits may be required for its function. May play a role in lysosomal ion flux and osmoregulation. This Rattus norvegicus (Rat) protein is Solute carrier family 12 member 9 (Slc12a9).